We begin with the raw amino-acid sequence, 137 residues long: Large-conductance mechanosensitive channel (137 aa).

Helical transmembrane passes span 10–30 (FAMR…AAFG) and 76–96 (GVFI…FMAI).

Belongs to the MscL family. Homopentamer.

The protein localises to the cell inner membrane. Functionally, channel that opens in response to stretch forces in the membrane lipid bilayer. May participate in the regulation of osmotic pressure changes within the cell. The polypeptide is Large-conductance mechanosensitive channel (Enterobacter sp. (strain 638)).